The primary structure comprises 507 residues: 3-octaprenyl-4-hydroxybenzoate carboxy-lyase (507 aa).

Residue Asn177 coordinates Mn(2+). Prenylated FMN contacts are provided by residues 180–182 (IYR), 194–196 (RWL), and 199–200 (RG). Glu243 contributes to the Mn(2+) binding site. Asp302 acts as the Proton donor in catalysis.

This sequence belongs to the UbiD family. Homohexamer. Prenylated FMN serves as cofactor. The cofactor is Mn(2+).

The protein localises to the cell membrane. It catalyses the reaction a 4-hydroxy-3-(all-trans-polyprenyl)benzoate + H(+) = a 2-(all-trans-polyprenyl)phenol + CO2. The protein operates within cofactor biosynthesis; ubiquinone biosynthesis. Its function is as follows. Catalyzes the decarboxylation of 3-octaprenyl-4-hydroxy benzoate to 2-octaprenylphenol, an intermediate step in ubiquinone biosynthesis. The sequence is that of 3-octaprenyl-4-hydroxybenzoate carboxy-lyase from Cupriavidus metallidurans (strain ATCC 43123 / DSM 2839 / NBRC 102507 / CH34) (Ralstonia metallidurans).